Here is a 564-residue protein sequence, read N- to C-terminus: Arginine--tRNA ligase (564 aa).

Residues 122–132 (PNIAKPFSIGH) carry the 'HIGH' region motif.

The protein belongs to the class-I aminoacyl-tRNA synthetase family. Monomer.

The protein localises to the cytoplasm. The catalysed reaction is tRNA(Arg) + L-arginine + ATP = L-arginyl-tRNA(Arg) + AMP + diphosphate. This chain is Arginine--tRNA ligase, found in Lactococcus lactis subsp. cremoris (strain MG1363).